We begin with the raw amino-acid sequence, 993 residues long: Serine/threonine-protein phosphatase 6 regulatory ankyrin repeat subunit B (993 aa).

ANK repeat units follow at residues 7-36 (CEQP…DVNA), 40-69 (EKRT…RVNA), 73-102 (MWLT…DVNA), 106-135 (NWQT…SVNV), 139-168 (GGRT…NINA), 172-201 (KDRR…EVTC), 205-234 (KGYT…EIDE), 238-267 (YGNT…NVNQ), 271-301 (SGFT…DVNI), 305-334 (DGKS…EIDC), 338-367 (DGNT…DTAK), 371-400 (HSMF…EIDT), 404-433 (FGRT…DFHK), 437-466 (CGRT…NVNE), 470-498 (WGRT…DNSE), 531-561 (EGYN…GFEE), 566-595 (ALKS…DLDI), 599-628 (KGRT…SIFV), 633-662 (TKRT…NPEV), 669-698 (KGQT…NVDA), 702-731 (VGCT…SILC), 735-764 (RGRT…SEED), 771-800 (QGYT…FRKF), 803-832 (NPFT…PSIV), 838-867 (KGRT…QVNA), 871-901 (SGKT…DLTV), 905-934 (DLNT…DESL), and 941-970 (ALQT…CVLA). Residues 974–993 (NASRSNGPRSPPGTAVRKEE) form a disordered region.

As to quaternary structure, protein phosphatase 6 (PP6) holoenzyme is proposed to be a heterotrimeric complex formed by the catalytic subunit, a SAPS domain-containing subunit (PP6R) and an ankyrin repeat-domain containing regulatory subunit (ARS). Interacts with PPP6R1.

In terms of biological role, putative regulatory subunit of protein phosphatase 6 (PP6) that may be involved in the recognition of phosphoprotein substrates. The polypeptide is Serine/threonine-protein phosphatase 6 regulatory ankyrin repeat subunit B (Ankrd44) (Mus musculus (Mouse)).